The following is a 208-amino-acid chain: Uracil phosphoribosyltransferase (208 aa).

5-phospho-alpha-D-ribose 1-diphosphate-binding positions include arginine 78, arginine 103, and 130–138 (DPMFATGGT). Uracil-binding positions include isoleucine 193 and 198–200 (GDA). Aspartate 199 lines the 5-phospho-alpha-D-ribose 1-diphosphate pocket.

It belongs to the UPRTase family. Requires Mg(2+) as cofactor.

It catalyses the reaction UMP + diphosphate = 5-phospho-alpha-D-ribose 1-diphosphate + uracil. The protein operates within pyrimidine metabolism; UMP biosynthesis via salvage pathway; UMP from uracil: step 1/1. With respect to regulation, allosterically activated by GTP. Catalyzes the conversion of uracil and 5-phospho-alpha-D-ribose 1-diphosphate (PRPP) to UMP and diphosphate. This chain is Uracil phosphoribosyltransferase, found in Campylobacter concisus (strain 13826).